A 500-amino-acid polypeptide reads, in one-letter code: L-arabinose isomerase (500 aa).

Residues E306, E333, H350, and H450 each contribute to the Mn(2+) site.

This sequence belongs to the arabinose isomerase family. In terms of assembly, homohexamer. Mn(2+) serves as cofactor.

It catalyses the reaction beta-L-arabinopyranose = L-ribulose. Its pathway is carbohydrate degradation; L-arabinose degradation via L-ribulose; D-xylulose 5-phosphate from L-arabinose (bacterial route): step 1/3. In terms of biological role, catalyzes the conversion of L-arabinose to L-ribulose. The sequence is that of L-arabinose isomerase from Escherichia coli (strain 55989 / EAEC).